The sequence spans 175 residues: MSIENLKEALPEYAKDLKLNLGTVARGTVLSQSQLWGTLVATAAATRNEQVFKEIREEAAGILTPEALDAALGAASIMAMTNVFYRGRGFLDGAYDDLRPGLRMNIIGNPGVDKSEFELWSFAVSTINGCHYCVGSHEKVLREAGLTREQVLEALKIAAIVAGVAQALATVPALV.

Cysteine 130 functions as the Proton donor in the catalytic mechanism. Cysteine 130 and cysteine 133 are joined by a disulfide. Cysteine 133 functions as the Cysteine sulfenic acid (-SOH) intermediate in the catalytic mechanism.

This sequence belongs to the AhpD family. As to quaternary structure, homotrimer.

It catalyses the reaction N(6)-[(R)-dihydrolipoyl]-L-lysyl-[lipoyl-carrier protein] + a hydroperoxide = N(6)-[(R)-lipoyl]-L-lysyl-[lipoyl-carrier protein] + an alcohol + H2O. Functionally, antioxidant protein with alkyl hydroperoxidase activity. Required for the reduction of the AhpC active site cysteine residues and for the regeneration of the AhpC enzyme activity. In Mycobacteroides abscessus (strain ATCC 19977 / DSM 44196 / CCUG 20993 / CIP 104536 / JCM 13569 / NCTC 13031 / TMC 1543 / L948) (Mycobacterium abscessus), this protein is Alkyl hydroperoxide reductase AhpD.